The chain runs to 174 residues: MKDLTMLLHELKDMSFFNKGDICLIGCSTSEVIGEKIGTVGSMEVAETIFNALDVVSKETGVTFAFQGCEHINRAITIEKSQFNPLTMEEVSVVPDVHAGGSLATYAFQHMKDPIVVEHITVPCGIDIGQTLIGMHIKHVCVPVRTSVKQVGQAIVTIATSRPKKIGGERAKYQ.

Belongs to the UPF0340 family.

The polypeptide is UPF0340 protein SAR2202 (Staphylococcus aureus (strain MRSA252)).